The primary structure comprises 121 residues: MRHYEIVLLIHPDQSEQVPAMLERYKGMITAGGGKVHRVEDWGRRQLVYLIQKLAKAHYLCINIEASQAVMEEIEHAFKFNDAVLRHLTVVKKKAETGPSLMMRNVEREEARKAQQQEYAA.

The segment at 102–121 is disordered; sequence MMRNVEREEARKAQQQEYAA. A compositionally biased stretch (basic and acidic residues) spans 105–115; it reads NVEREEARKAQ.

This sequence belongs to the bacterial ribosomal protein bS6 family.

In terms of biological role, binds together with bS18 to 16S ribosomal RNA. The polypeptide is Small ribosomal subunit protein bS6 (Polaromonas sp. (strain JS666 / ATCC BAA-500)).